The primary structure comprises 883 residues: DNA mismatch repair protein MutS (883 aa).

619 to 626 (GPNMGGKS) is a binding site for ATP.

Belongs to the DNA mismatch repair MutS family.

Its function is as follows. This protein is involved in the repair of mismatches in DNA. It is possible that it carries out the mismatch recognition step. This protein has a weak ATPase activity. This Marinomonas sp. (strain MWYL1) protein is DNA mismatch repair protein MutS.